The sequence spans 443 residues: Threonine/serine transporter TdcC (443 aa).

Transmembrane regions (helical) follow at residues 24–44, 45–65, 95–115, 140–160, 163–183, 207–227, 259–279, 319–339, 363–383, 385–405, and 423–443; these read WVLG…PISA, GIGG…IAFF, VGGV…LWIY, VVAL…KDLM, VMGY…LSLI, ILVT…FSPI, ASVL…FTLS, ASII…LGTL, LNMI…YINP, ILDL…CLLP, and SNYF…YQLM.

This sequence belongs to the amino acid/polyamine transporter 2 family. SdaC/TdcC subfamily.

The protein localises to the cell inner membrane. It catalyses the reaction L-threonine(in) + H(+)(in) = L-threonine(out) + H(+)(out). The enzyme catalyses L-serine(in) + H(+)(in) = L-serine(out) + H(+)(out). In terms of biological role, involved in the import of threonine and serine into the cell, with the concomitant import of a proton (symport system). The polypeptide is Threonine/serine transporter TdcC (Edwardsiella piscicida).